A 71-amino-acid polypeptide reads, in one-letter code: uncharacterized protein (71 aa).

It is found in the mitochondrion matrix. It localises to the kinetoplast. This is an uncharacterized protein from Trypanosoma brucei brucei.